The sequence spans 157 residues: Crossover junction endodeoxyribonuclease RuvC (157 aa).

Catalysis depends on residues aspartate 7, glutamate 67, and aspartate 140. Residues aspartate 7, glutamate 67, and aspartate 140 each contribute to the Mg(2+) site.

The protein belongs to the RuvC family. Homodimer which binds Holliday junction (HJ) DNA. The HJ becomes 2-fold symmetrical on binding to RuvC with unstacked arms; it has a different conformation from HJ DNA in complex with RuvA. In the full resolvosome a probable DNA-RuvA(4)-RuvB(12)-RuvC(2) complex forms which resolves the HJ. The cofactor is Mg(2+).

It is found in the cytoplasm. The enzyme catalyses Endonucleolytic cleavage at a junction such as a reciprocal single-stranded crossover between two homologous DNA duplexes (Holliday junction).. Its function is as follows. The RuvA-RuvB-RuvC complex processes Holliday junction (HJ) DNA during genetic recombination and DNA repair. Endonuclease that resolves HJ intermediates. Cleaves cruciform DNA by making single-stranded nicks across the HJ at symmetrical positions within the homologous arms, yielding a 5'-phosphate and a 3'-hydroxyl group; requires a central core of homology in the junction. The consensus cleavage sequence is 5'-(A/T)TT(C/G)-3'. Cleavage occurs on the 3'-side of the TT dinucleotide at the point of strand exchange. HJ branch migration catalyzed by RuvA-RuvB allows RuvC to scan DNA until it finds its consensus sequence, where it cleaves and resolves the cruciform DNA. The protein is Crossover junction endodeoxyribonuclease RuvC of Thermosipho melanesiensis (strain DSM 12029 / CIP 104789 / BI429).